An 88-amino-acid polypeptide reads, in one-letter code: uncharacterized protein (88 aa).

This is an uncharacterized protein from Vaccinia virus (strain Copenhagen) (VACV).